A 396-amino-acid polypeptide reads, in one-letter code: Elongation factor Tu (396 aa).

A tr-type G domain is found at lysine 10–glutamine 206. A G1 region spans residues glycine 19 to threonine 26. Glycine 19–threonine 26 provides a ligand contact to GTP. Position 26 (threonine 26) interacts with Mg(2+). A G2 region spans residues glycine 60–alanine 64. The interval aspartate 81–glycine 84 is G3. Residues aspartate 81–histidine 85 and asparagine 136–aspartate 139 each bind GTP. The tract at residues asparagine 136 to aspartate 139 is G4. The tract at residues serine 174 to leucine 176 is G5.

Belongs to the TRAFAC class translation factor GTPase superfamily. Classic translation factor GTPase family. EF-Tu/EF-1A subfamily. Monomer.

The protein localises to the cytoplasm. The enzyme catalyses GTP + H2O = GDP + phosphate + H(+). Functionally, GTP hydrolase that promotes the GTP-dependent binding of aminoacyl-tRNA to the A-site of ribosomes during protein biosynthesis. This chain is Elongation factor Tu, found in Anaeromyxobacter dehalogenans (strain 2CP-C).